The chain runs to 191 residues: Elongation factor P (191 aa).

This sequence belongs to the elongation factor P family.

It is found in the cytoplasm. The protein operates within protein biosynthesis; polypeptide chain elongation. Functionally, involved in peptide bond synthesis. Stimulates efficient translation and peptide-bond synthesis on native or reconstituted 70S ribosomes in vitro. Probably functions indirectly by altering the affinity of the ribosome for aminoacyl-tRNA, thus increasing their reactivity as acceptors for peptidyl transferase. In Ralstonia pickettii (strain 12J), this protein is Elongation factor P.